We begin with the raw amino-acid sequence, 242 residues long: ATP synthase subunit a (242 aa).

5 helical membrane passes run 28 to 48 (LHGQ…LLVV), 89 to 109 (LPFV…GALI), 128 to 148 (INTT…AGLS), 193 to 213 (LVVA…AMFL), and 214 to 234 (GLFT…NYIG).

Belongs to the ATPase A chain family. In terms of assembly, F-type ATPases have 2 components, CF(1) - the catalytic core - and CF(0) - the membrane proton channel. CF(1) has five subunits: alpha(3), beta(3), gamma(1), delta(1), epsilon(1). CF(0) has four main subunits: a, b, b' and c.

The protein localises to the cellular thylakoid membrane. In terms of biological role, key component of the proton channel; it plays a direct role in the translocation of protons across the membrane. This chain is ATP synthase subunit a, found in Synechococcus sp. (strain WH7803).